Reading from the N-terminus, the 594-residue chain is MKNIRNFSIIAHIDHGKSTLSDRFIQVCNGLSEREMKEQVLDSMDIERERGITIKAQSVTLDYTARDGQTYQLNFIDTPGHVDFSYEVSRSLAACEGALLVVDAAQGVEAQTVANCYTAIEQNLEVIPILNKIDLPSAEPDRVAQEIEEIIGIDATGATTCSAKTGIGVEDVLETIVAKVPAPEGDVNAKLQALIIDSWFDNYLGVVSLVRVKNGTIKKGEKFKVMSTGVAYQVDRLGVFTPKMKDLDHLKAGEVGFIVAGIKDIHGAPVGDTLTHAHNPTDKPVPGFKKVQPQVYAGMFTISSDDYPDFREALEKLSLNDASLFFEPEVSQALGFGFRCGFLGMLHMEIIQERLEREYNLDLITSAPTVVYKAIKKDGEIIEVDNPSKLPEPGAIAEIQEPIVRANILVPKDYVGSVITICIEKRGVQVDLNYVGNQVSITYDLPMIEVVSDFFDTLKSVTKGYGSLDYELIRYEPANMVRLDVLINGDKVDALASIVHKDQAKYKGRELVERLKELIPRQMFEVAIQAAIGGTIVARSTVKALRKNVLAKCYGGDVSRKKKLLEKQKEGKKRMKNIGSVEIPQEAFLSVLKK.

In terms of domain architecture, tr-type G spans 2–184 (KNIRNFSIIA…TIVAKVPAPE (183 aa)). Residues 14–19 (DHGKST) and 131–134 (NKID) contribute to the GTP site.

It belongs to the TRAFAC class translation factor GTPase superfamily. Classic translation factor GTPase family. LepA subfamily.

It localises to the cell inner membrane. The catalysed reaction is GTP + H2O = GDP + phosphate + H(+). Its function is as follows. Required for accurate and efficient protein synthesis under certain stress conditions. May act as a fidelity factor of the translation reaction, by catalyzing a one-codon backward translocation of tRNAs on improperly translocated ribosomes. Back-translocation proceeds from a post-translocation (POST) complex to a pre-translocation (PRE) complex, thus giving elongation factor G a second chance to translocate the tRNAs correctly. Binds to ribosomes in a GTP-dependent manner. This chain is Elongation factor 4, found in Francisella tularensis subsp. novicida (strain U112).